The following is a 67-amino-acid chain: Large ribosomal subunit protein uL30 (67 aa).

This sequence belongs to the universal ribosomal protein uL30 family. As to quaternary structure, part of the 50S ribosomal subunit.

This Sorangium cellulosum (strain So ce56) (Polyangium cellulosum (strain So ce56)) protein is Large ribosomal subunit protein uL30.